The sequence spans 653 residues: Fructose-1,6-bisphosphatase class 3 (653 aa).

The protein belongs to the FBPase class 3 family. Mn(2+) serves as cofactor.

The catalysed reaction is beta-D-fructose 1,6-bisphosphate + H2O = beta-D-fructose 6-phosphate + phosphate. It functions in the pathway carbohydrate biosynthesis; gluconeogenesis. This Listeria monocytogenes serotype 4b (strain CLIP80459) protein is Fructose-1,6-bisphosphatase class 3.